Reading from the N-terminus, the 560-residue chain is Long-chain-fatty-acid--CoA ligase (560 aa).

The protein belongs to the ATP-dependent AMP-binding enzyme family.

The catalysed reaction is a long-chain fatty acid + ATP + CoA = a long-chain fatty acyl-CoA + AMP + diphosphate. The polypeptide is Long-chain-fatty-acid--CoA ligase (lcfA) (Bacillus subtilis (strain 168)).